The sequence spans 142 residues: Hemoglobin subunit alpha (142 aa).

The Globin domain maps to 2–142 (VLSPADKTNV…VSTVLTSKYR (141 aa)). Serine 4 is subject to Phosphoserine. At lysine 8 the chain carries N6-succinyllysine. A Phosphothreonine modification is found at threonine 9. N6-succinyllysine is present on lysine 12. N6-acetyllysine; alternate is present on lysine 17. Position 17 is an N6-succinyllysine; alternate (lysine 17). Tyrosine 25 is modified (phosphotyrosine). Phosphoserine is present on serine 36. At lysine 41 the chain carries N6-succinyllysine. Serine 50 bears the Phosphoserine mark. Histidine 59 contacts O2. Position 88 (histidine 88) interacts with heme b. The residue at position 103 (serine 103) is a Phosphoserine. Residue threonine 109 is modified to Phosphothreonine. A Phosphoserine modification is found at serine 125. Threonine 135 and threonine 138 each carry phosphothreonine. A Phosphoserine modification is found at serine 139.

This sequence belongs to the globin family. As to quaternary structure, heterotetramer of two alpha chains and two beta chains. As to expression, red blood cells.

Involved in oxygen transport from the lung to the various peripheral tissues. Functionally, hemopressin acts as an antagonist peptide of the cannabinoid receptor CNR1. Hemopressin-binding efficiently blocks cannabinoid receptor CNR1 and subsequent signaling. The protein is Hemoglobin subunit alpha (HBA) of Ailuropoda melanoleuca (Giant panda).